The primary structure comprises 375 residues: 23S rRNA (uracil(747)-C(5))-methyltransferase RlmC (375 aa).

Positions 3, 11, 14, and 87 each coordinate [4Fe-4S] cluster. S-adenosyl-L-methionine contacts are provided by Q212, F241, E262, and N307. The active-site Nucleophile is the C334.

Belongs to the class I-like SAM-binding methyltransferase superfamily. RNA M5U methyltransferase family. RlmC subfamily.

It carries out the reaction uridine(747) in 23S rRNA + S-adenosyl-L-methionine = 5-methyluridine(747) in 23S rRNA + S-adenosyl-L-homocysteine + H(+). Catalyzes the formation of 5-methyl-uridine at position 747 (m5U747) in 23S rRNA. The polypeptide is 23S rRNA (uracil(747)-C(5))-methyltransferase RlmC (Escherichia coli O7:K1 (strain IAI39 / ExPEC)).